We begin with the raw amino-acid sequence, 689 residues long: MFERNQKTIFVLDHTRYFSIASEEYISMDFLKGKPSGDGGATGAAGNATGSGGSQFSKSLWTCACESSIEYCRVVWDLFPGKKHVRFIVSDTAAHIVNTWSPSTQNMSHVMNAMVMVGVPSRNVPTSSDYSVIHGLRAAIEALAEPTDEQLAAMADLGTDELPRIPNKGRVICITSARDNTSMKSLEDIFNTVLVQQNTLAAPPAKKGLVIDHCHLVILNIVPLGVESLVTNRSLLKISPLLDVEIHTVSAPDISYKLTHLILNHYDLASTTVTNIPMKEEQNANSSANYDVEILHSRRAHSITCGPDFSLPTSIKQGATYETVTLKWCTPRGCGSAHLQPCLGQFLVTPVDVTSRPSSCLINFLLNGRSVLLEMPRKTGSKATSHMLSARGGEIFVHSLCITRSCMDEAPSITDGPGGRVSDYRTAELGQLIKMSRMVPLKVKDPSAPPLTRRLPRYFPLTTSSSILFHLQRHISWLPHFLHLLVKEDMDKQDEVRCQQHIHELYKSASRGDVLPFTHTNGARLKLSKAKDQYRLLYRELEQLIQLNATTMHHKNLLESLQSLRAAYGDAPLKSEPGASLLRSFTESPLSPERLEPISSVGASGSSNSNSLLKASKRRMSSCGQRSLLDIISSAERSQSNKRLDFSGRLCTPLGQVAKLYPEFGTKDKDAVTTGASITPNVKEESVRS.

The stretch at 521 to 550 forms a coiled coil; sequence NGARLKLSKAKDQYRLLYRELEQLIQLNAT. 2 disordered regions span residues 591–619 and 669–689; these read SPER…SKRR and KDAV…SVRS. A compositionally biased stretch (low complexity) spans 599–614; sequence SSVGASGSSNSNSLLK. Residues 613–619 carry the Nuclear localization signal (NLS) motif; sequence LKASKRR.

The protein belongs to the Integrator subunit 13 family. Belongs to the multiprotein complex Integrator, at least composed of IntS1, IntS2, IntS3, IntS4, omd/IntS5, IntS6, defl/IntS7, IntS8, IntS9, IntS10, IntS11, IntS12, asun/IntS13, IntS14 and IntS15. The core complex associates with protein phosphatase 2A subunits mts/PP2A and Pp2A-29B, to form the Integrator-PP2A (INTAC) complex. In terms of processing, phosphorylated.

The protein localises to the nucleus. It localises to the cytoplasm. Its subcellular location is the perinuclear region. Functionally, component of the integrator complex, a multiprotein complex that terminates RNA polymerase II (Pol II) transcription in the promoter-proximal region of genes. The integrator complex provides a quality checkpoint during transcription elongation by driving premature transcription termination of transcripts that are unfavorably configured for transcriptional elongation: the complex terminates transcription by (1) catalyzing dephosphorylation of the C-terminal domain (CTD) of Pol II subunit Polr2A/Rbp1 and Spt5, and (2) degrading the exiting nascent RNA transcript via endonuclease activity. The integrator complex is also involved in the 3'-end processing of the U7 snRNA, and also the spliceosomal snRNAs U1, U2, U4 and U5. This is Protein asunder (asun) from Drosophila simulans (Fruit fly).